The sequence spans 269 residues: Formamidopyrimidine-DNA glycosylase (269 aa).

Pro-2 functions as the Schiff-base intermediate with DNA in the catalytic mechanism. Glu-3 serves as the catalytic Proton donor. Lys-57 serves as the catalytic Proton donor; for beta-elimination activity. DNA contacts are provided by His-90, Arg-109, and Lys-150. The FPG-type zinc-finger motif lies at 235–269; the sequence is QVYGKGGLPCPKCGTELAEVKIGQRATVYCSQCQQ. Arg-259 acts as the Proton donor; for delta-elimination activity in catalysis.

Belongs to the FPG family. As to quaternary structure, monomer. Zn(2+) is required as a cofactor.

It carries out the reaction Hydrolysis of DNA containing ring-opened 7-methylguanine residues, releasing 2,6-diamino-4-hydroxy-5-(N-methyl)formamidopyrimidine.. The catalysed reaction is 2'-deoxyribonucleotide-(2'-deoxyribose 5'-phosphate)-2'-deoxyribonucleotide-DNA = a 3'-end 2'-deoxyribonucleotide-(2,3-dehydro-2,3-deoxyribose 5'-phosphate)-DNA + a 5'-end 5'-phospho-2'-deoxyribonucleoside-DNA + H(+). Involved in base excision repair of DNA damaged by oxidation or by mutagenic agents. Acts as a DNA glycosylase that recognizes and removes damaged bases. Has a preference for oxidized purines, such as 7,8-dihydro-8-oxoguanine (8-oxoG). Has AP (apurinic/apyrimidinic) lyase activity and introduces nicks in the DNA strand. Cleaves the DNA backbone by beta-delta elimination to generate a single-strand break at the site of the removed base with both 3'- and 5'-phosphates. This Photobacterium damsela subsp. piscicida (Pasteurella piscicida) protein is Formamidopyrimidine-DNA glycosylase.